Here is a 305-residue protein sequence, read N- to C-terminus: Sulfate adenylyltransferase subunit 2 (305 aa).

This sequence belongs to the PAPS reductase family. CysD subfamily. As to quaternary structure, heterodimer composed of CysD, the smaller subunit, and CysN.

It catalyses the reaction sulfate + ATP + H(+) = adenosine 5'-phosphosulfate + diphosphate. It functions in the pathway sulfur metabolism; hydrogen sulfide biosynthesis; sulfite from sulfate: step 1/3. Its function is as follows. With CysN forms the ATP sulfurylase (ATPS) that catalyzes the adenylation of sulfate producing adenosine 5'-phosphosulfate (APS) and diphosphate, the first enzymatic step in sulfur assimilation pathway. APS synthesis involves the formation of a high-energy phosphoric-sulfuric acid anhydride bond driven by GTP hydrolysis by CysN coupled to ATP hydrolysis by CysD. This chain is Sulfate adenylyltransferase subunit 2, found in Myxococcus xanthus (strain DK1622).